The sequence spans 141 residues: Meiotically up-regulated gene 118 protein (141 aa).

Residues 106–115 are compositionally biased toward polar residues; that stretch reads LSSQKSARQP. Residues 106–141 are disordered; it reads LSSQKSARQPTKTVASSSSSSSKSTTVSKSSSKSQV. The segment covering 116–141 has biased composition (low complexity); it reads TKTVASSSSSSSKSTTVSKSSSKSQV.

It localises to the nucleus. In terms of biological role, has a role in meiosis. The sequence is that of Meiotically up-regulated gene 118 protein (mug118) from Schizosaccharomyces pombe (strain 972 / ATCC 24843) (Fission yeast).